A 731-amino-acid chain; its full sequence is Alpha-catulin (731 aa).

S373 and S537 each carry phosphoserine. Residues H535–E559 are disordered.

The protein belongs to the vinculin/alpha-catenin family. Interacts with ARHGEF1. Interacts with Dtna. The interaction is required for correct localization of both Ctnnal1 and Dtna.

Its subcellular location is the cytoplasm. It is found in the cytoskeleton. The protein localises to the cell membrane. Functionally, may modulate the Rho pathway signaling by providing a scaffold for the Lbc Rho guanine nucleotide exchange factor (ARHGEF1). The protein is Alpha-catulin (Ctnnal1) of Mus musculus (Mouse).